Reading from the N-terminus, the 370-residue chain is tRNA-specific 2-thiouridylase MnmA (370 aa).

ATP-binding positions include 11 to 18 (GMSGGVDS) and Met-37. An interaction with target base in tRNA region spans residues 97–99 (NPD). Cys-102 serves as the catalytic Nucleophile. A disulfide bond links Cys-102 and Cys-199. Gly-126 is a binding site for ATP. The segment at 149–151 (KDQ) is interaction with tRNA. Catalysis depends on Cys-199, which acts as the Cysteine persulfide intermediate. The segment at 307-308 (RY) is interaction with tRNA.

The protein belongs to the MnmA/TRMU family.

The protein localises to the cytoplasm. It carries out the reaction S-sulfanyl-L-cysteinyl-[protein] + uridine(34) in tRNA + AH2 + ATP = 2-thiouridine(34) in tRNA + L-cysteinyl-[protein] + A + AMP + diphosphate + H(+). Catalyzes the 2-thiolation of uridine at the wobble position (U34) of tRNA, leading to the formation of s(2)U34. The polypeptide is tRNA-specific 2-thiouridylase MnmA (Staphylococcus haemolyticus (strain JCSC1435)).